We begin with the raw amino-acid sequence, 359 residues long: tRNA-specific 2-thiouridylase MnmA (359 aa).

Residues 11–18 and I37 each bind ATP; that span reads GISGGVDS. C99 (nucleophile) is an active-site residue. The cysteines at positions 99 and 195 are disulfide-linked. Residue G123 coordinates ATP. An interaction with tRNA region spans residues 145-147; the sequence is KDQ. C195 (cysteine persulfide intermediate) is an active-site residue. The interval 304-305 is interaction with tRNA; it reads RY.

This sequence belongs to the MnmA/TRMU family.

The protein localises to the cytoplasm. It catalyses the reaction S-sulfanyl-L-cysteinyl-[protein] + uridine(34) in tRNA + AH2 + ATP = 2-thiouridine(34) in tRNA + L-cysteinyl-[protein] + A + AMP + diphosphate + H(+). Its function is as follows. Catalyzes the 2-thiolation of uridine at the wobble position (U34) of tRNA, leading to the formation of s(2)U34. The chain is tRNA-specific 2-thiouridylase MnmA from Chlorobium phaeobacteroides (strain BS1).